The chain runs to 160 residues: Ribosomal RNA large subunit methyltransferase H (160 aa).

S-adenosyl-L-methionine is bound by residues Leu76, Gly108, and 127-132; that span reads LGKMTW.

This sequence belongs to the RNA methyltransferase RlmH family. As to quaternary structure, homodimer.

Its subcellular location is the cytoplasm. The catalysed reaction is pseudouridine(1915) in 23S rRNA + S-adenosyl-L-methionine = N(3)-methylpseudouridine(1915) in 23S rRNA + S-adenosyl-L-homocysteine + H(+). In terms of biological role, specifically methylates the pseudouridine at position 1915 (m3Psi1915) in 23S rRNA. The polypeptide is Ribosomal RNA large subunit methyltransferase H (Sinorhizobium fredii (strain NBRC 101917 / NGR234)).